The primary structure comprises 311 residues: Aspartate carbamoyltransferase catalytic subunit (311 aa).

2 residues coordinate carbamoyl phosphate: Arg52 and Thr53. Residue Lys80 coordinates L-aspartate. Residues Arg102, His131, and Gln134 each contribute to the carbamoyl phosphate site. Residues Arg164 and Arg216 each coordinate L-aspartate. Carbamoyl phosphate contacts are provided by Ala259 and Pro260.

It belongs to the aspartate/ornithine carbamoyltransferase superfamily. ATCase family. Heterododecamer (2C3:3R2) of six catalytic PyrB chains organized as two trimers (C3), and six regulatory PyrI chains organized as three dimers (R2).

The catalysed reaction is carbamoyl phosphate + L-aspartate = N-carbamoyl-L-aspartate + phosphate + H(+). The protein operates within pyrimidine metabolism; UMP biosynthesis via de novo pathway; (S)-dihydroorotate from bicarbonate: step 2/3. Catalyzes the condensation of carbamoyl phosphate and aspartate to form carbamoyl aspartate and inorganic phosphate, the committed step in the de novo pyrimidine nucleotide biosynthesis pathway. This is Aspartate carbamoyltransferase catalytic subunit from Lactiplantibacillus plantarum (strain ATCC BAA-793 / NCIMB 8826 / WCFS1) (Lactobacillus plantarum).